The primary structure comprises 354 residues: GTPase Obg (354 aa).

Residues 1 to 159 (MKFVDEVKIH…RDLVLELKLL (159 aa)) form the Obg domain. In terms of domain architecture, OBG-type G spans 160–333 (ADVGIVGYPN…LLDAVGRALF (174 aa)). Residues 166–173 (GYPNAGKS), 191–195 (FTTLT), 212–215 (DIPG), 283–286 (TKID), and 314–316 (SAV) contribute to the GTP site. Mg(2+)-binding residues include S173 and T193.

Belongs to the TRAFAC class OBG-HflX-like GTPase superfamily. OBG GTPase family. Monomer. Mg(2+) is required as a cofactor.

It is found in the cytoplasm. In terms of biological role, an essential GTPase which binds GTP, GDP and possibly (p)ppGpp with moderate affinity, with high nucleotide exchange rates and a fairly low GTP hydrolysis rate. Plays a role in control of the cell cycle, stress response, ribosome biogenesis and in those bacteria that undergo differentiation, in morphogenesis control. The polypeptide is GTPase Obg (Anaeromyxobacter dehalogenans (strain 2CP-C)).